A 394-amino-acid chain; its full sequence is Sugar efflux transporter C (394 aa).

Residues 1-10 lie on the Periplasmic side of the membrane; it reads MQKTATTPSK. Residues 11-31 traverse the membrane as a helical segment; it reads ILDLTAAAFLLVAFLTGIAGA. Over 32–49 the chain is Cytoplasmic; the sequence is LQTPTLSIFLADELKARP. The helical transmembrane segment at 50 to 70 threads the bilayer; that stretch reads IMVGFFFTGSAIMGILVSQFL. At 71 to 80 the chain is on the periplasmic side; sequence ARHSDKQGDR. A helical membrane pass occupies residues 81–101; the sequence is KLLILLCCLFGVLACTLFAWN. At 102-104 the chain is on the cytoplasmic side; sequence RNY. Residues 105-125 form a helical membrane-spanning segment; that stretch reads FILLSTGVLLSSFASTANPQM. Residues 126-150 lie on the Periplasmic side of the membrane; it reads FALAREHADRTGRETVMFSTFLRAQ. A helical membrane pass occupies residues 151–171; it reads ISLAWVIGPPLAYELAMGFSF. Lys-172 is a topological domain (cytoplasmic). A helical transmembrane segment spans residues 173–193; sequence VMYLTAAIAFVVCGLIVWLFL. Residues 194 to 224 lie on the Periplasmic side of the membrane; that stretch reads PSIQRNIPVVTQPVEILPSTHRKRDTRLLFV. The helical transmembrane segment at 225-245 threads the bilayer; the sequence is VCSMMWAANNLYMINMPLFII. The Cytoplasmic portion of the chain corresponds to 246–253; sequence DELHLTDK. A helical transmembrane segment spans residues 254-274; the sequence is LTGEMIGIAAGLEIPMMLIAG. The Periplasmic portion of the chain corresponds to 275-283; the sequence is YYMKRIGKR. A helical membrane pass occupies residues 284 to 304; sequence LLMLIAIVSGMCFYASVLMAT. Residues 305 to 310 are Cytoplasmic-facing; that stretch reads TPAVEL. The chain crosses the membrane as a helical span at residues 311 to 331; that stretch reads ELQILNAIFLGILCGIGMLYF. At 332–370 the chain is on the periplasmic side; it reads QDLMPEKIGSATTLYANTSRVGWIIAGSVDGIMVEIWSY. The helical transmembrane segment at 371–391 threads the bilayer; sequence HALFWLAIGMLGIAMICLLFI. The Cytoplasmic segment spans residues 392-394; the sequence is KDI.

This sequence belongs to the major facilitator superfamily. Set transporter family.

It is found in the cell inner membrane. Functionally, involved in the efflux of sugars. The physiological role may be the detoxification of non-metabolizable sugar analogs. The chain is Sugar efflux transporter C (setC) from Escherichia coli (strain K12).